A 433-amino-acid polypeptide reads, in one-letter code: 3-phosphoshikimate 1-carboxyvinyltransferase (433 aa).

Positions 20, 21, and 25 each coordinate 3-phosphoshikimate. K20 provides a ligand contact to phosphoenolpyruvate. Phosphoenolpyruvate is bound by residues G92 and R121. Residues S167, S168, Q169, S195, D315, and K342 each coordinate 3-phosphoshikimate. Residue Q169 coordinates phosphoenolpyruvate. D315 acts as the Proton acceptor in catalysis. R346 and R388 together coordinate phosphoenolpyruvate.

The protein belongs to the EPSP synthase family. As to quaternary structure, monomer.

The protein localises to the cytoplasm. The enzyme catalyses 3-phosphoshikimate + phosphoenolpyruvate = 5-O-(1-carboxyvinyl)-3-phosphoshikimate + phosphate. It participates in metabolic intermediate biosynthesis; chorismate biosynthesis. Its function is as follows. Catalyzes the transfer of the enolpyruvyl moiety of phosphoenolpyruvate (PEP) to the 5-hydroxyl of shikimate-3-phosphate (S3P) to produce enolpyruvyl shikimate-3-phosphate and inorganic phosphate. This Methanococcus aeolicus (strain ATCC BAA-1280 / DSM 17508 / OCM 812 / Nankai-3) protein is 3-phosphoshikimate 1-carboxyvinyltransferase.